Consider the following 119-residue polypeptide: Platelet basic protein (119 aa).

The first 33 residues, 1–33, serve as a signal peptide directing secretion; the sequence is MSLRLGAISSCTTSSPFPVLQVLLPLSLLLTTL. Residues 34–39 constitute a propeptide that is removed on maturation; that stretch reads VPATMG. 2 disulfides stabilise this stretch: Cys-54/Cys-80 and Cys-56/Cys-96.

Its subcellular location is the secreted. Functionally, chemoattractant factor for neutrophils. This Sus scrofa (Pig) protein is Platelet basic protein (PPBP).